The primary structure comprises 101 residues: Protein S100-A4 (101 aa).

The residue at position 2 (Ala-2) is an N-acetylalanine. 2 consecutive EF-hand domains span residues 12–47 (IVST…SFLG) and 50–85 (TDEA…IAMM). Residues Lys-28 and Glu-33 each contribute to the Ca(2+) site. Position 35 is an N6-acetyllysine (Lys-35). Positions 63, 65, 67, 69, and 74 each coordinate Ca(2+).

It belongs to the S-100 family. Homodimer. Interacts with PPFIBP1 in a calcium-dependent mode. Interacts with PGLYRP1; this complex acts as a chemoattractant that promotes lymphocyte movement. Interacts with MYH9; this interaction increases cell motility. Interacts with Annexin 2/ANXA2. Interacts with TP53; this interaction promotes TP53 degradation. Interacts with CCR5 and CXCR3. Interacts with FCGR3A; this interaction inhibits PKC-dependent phosphorylation of FCGR3A. Specifically expressed in different metastatic cells.

It localises to the secreted. Its subcellular location is the nucleus. It is found in the cytoplasm. Calcium-binding protein that plays a role in various cellular processes including motility, angiogenesis, cell differentiation, apoptosis, and autophagy. Increases cell motility and invasiveness by interacting with non-muscle myosin heavy chain (NMMHC) IIA/MYH9. Mechanistically, promotes filament depolymerization and increases the amount of soluble myosin-IIA, resulting in the formation of stable protrusions facilitating chemotaxis. Also modulates the pro-apoptotic function of TP53 by binding to its C-terminal transactivation domain within the nucleus and reducing its protein levels. Within the extracellular space, stimulates cytokine production including granulocyte colony-stimulating factor and CCL24 from T-lymphocytes. In addition, stimulates T-lymphocyte chemotaxis by acting as a chemoattractant complex with PGLYRP1 that promotes lymphocyte migration via CCR5 and CXCR3 receptors. The sequence is that of Protein S100-A4 (S100a4) from Mus musculus (Mouse).